Here is a 578-residue protein sequence, read N- to C-terminus: Leucine-rich repeat-containing protein 15 (578 aa).

The first 21 residues, 1–21 (MPLKHYLLLLVGCQAWALGLA), serve as a signal peptide directing secretion. The LRRNT domain occupies 22–53 (YYGCPSECTCSRASQVECTGARIVAMPTPLPW). Residues 22 to 535 (YYGCPSECTC…TWGMTEAQSG (514 aa)) lie on the Extracellular side of the membrane. 15 LRR repeats span residues 54 to 75 (NAMS…LFLN), 78 to 99 (ALIA…AFRN), 102 to 123 (SLRY…VFQD), 126 to 147 (NLES…QFSQ), 150 to 171 (NLRE…AFDH), 174 to 195 (GLTK…LFQH), 198 to 219 (NLQV…TFDA), 222 to 243 (NLQE…LFHN), 246 to 267 (NLQR…IFMQ), 270 to 291 (QLNK…VFGP), 294 to 315 (NLRE…TFSH), 318 to 339 (QLQV…AFNG), 342 to 363 (NLRE…VFRS), 366 to 387 (NLQN…IFAN), and 390 to 411 (GLTT…IFDH). Asn-75 carries an N-linked (GlcNAc...) asparagine glycan. A glycan (N-linked (GlcNAc...) asparagine) is linked at Asn-369. An LRRCT domain is found at 423–473 (NPWRCDSDILPLHNWLLLNRARLGTDTLPVCSSPANVRGQSLVIININFPG). Residues 476 to 500 (VQGPETPEVPSYPDTPSYPDTTSVS) form a disordered region. The helical transmembrane segment at 536–556 (LAIAAIVIGIIALACSLAACI) threads the bilayer. Residues 557-578 (CCCCCKKRSQAVLMQMKAPNEC) are Cytoplasmic-facing.

It is found in the cell membrane. The sequence is that of Leucine-rich repeat-containing protein 15 (Lrrc15) from Rattus norvegicus (Rat).